The sequence spans 417 residues: Serine--tRNA ligase (417 aa).

226-228 is an L-serine binding site; it reads TSE. ATP is bound by residues 257 to 259 and V273; that span reads RRE. E280 contributes to the L-serine binding site. ATP is bound at residue 344 to 347; that stretch reads EVTS. Residue T379 coordinates L-serine.

Belongs to the class-II aminoacyl-tRNA synthetase family. Type-1 seryl-tRNA synthetase subfamily. As to quaternary structure, homodimer. The tRNA molecule binds across the dimer.

The protein localises to the cytoplasm. The catalysed reaction is tRNA(Ser) + L-serine + ATP = L-seryl-tRNA(Ser) + AMP + diphosphate + H(+). It carries out the reaction tRNA(Sec) + L-serine + ATP = L-seryl-tRNA(Sec) + AMP + diphosphate + H(+). It functions in the pathway aminoacyl-tRNA biosynthesis; selenocysteinyl-tRNA(Sec) biosynthesis; L-seryl-tRNA(Sec) from L-serine and tRNA(Sec): step 1/1. Functionally, catalyzes the attachment of serine to tRNA(Ser). Is also able to aminoacylate tRNA(Sec) with serine, to form the misacylated tRNA L-seryl-tRNA(Sec), which will be further converted into selenocysteinyl-tRNA(Sec). The polypeptide is Serine--tRNA ligase (Tropheryma whipplei (strain TW08/27) (Whipple's bacillus)).